A 240-amino-acid polypeptide reads, in one-letter code: RING finger protein 151 (240 aa).

The RING-type zinc-finger motif lies at 20–58; sequence CSVCHGVLKRPVRLPCSHIFCKKCILRWLARQKTCPCCR. The TRAF-type zinc finger occupies 101–156; sequence GHQDSCPFELMVCPNEGCMLRVPRGALDEHRQNCQHGAYHRCSLGCGATLGPVERA.

This Bos taurus (Bovine) protein is RING finger protein 151 (RNF151).